Reading from the N-terminus, the 1620-residue chain is Putative zinc carboxypeptidase (1620 aa).

Residues 1–1367 (MLFKNEDSGN…SYDFLYFDEN (1367 aa)) are Extracellular-facing. Residue asparagine 19 is glycosylated (N-linked (GlcNAc...) asparagine). The segment at 32–74 (RNDNKNNDNEDNKQDDEEKNDEDDNKSNLLLEENEENKRQGDK) is disordered. Positions 33-43 (NDNKNNDNEDN) are enriched in basic and acidic residues. Residues 44–55 (KQDDEEKNDEDD) are compositionally biased toward acidic residues. Residues asparagine 56 and asparagine 102 are each glycosylated (N-linked (GlcNAc...) asparagine). The interval 309 to 328 (GNHYDAHESTNTYDEEKTRE) is disordered. Residues asparagine 354, asparagine 487, asparagine 508, asparagine 529, asparagine 550, asparagine 571, asparagine 589, asparagine 687, asparagine 802, and asparagine 1010 are each glycosylated (N-linked (GlcNAc...) asparagine). The possible malaria epitope stretch occupies residues 497 to 559 (VNNLDSTVNY…NSTGNNINNI (63 aa)). The region spanning 1004–1261 (GENKKNNGTK…FYVQNYFEGY (258 aa)) is the Peptidase M14 domain. 2 residues coordinate Zn(2+): histidine 1059 and glutamate 1062. Asparagine 1064 and asparagine 1141 each carry an N-linked (GlcNAc...) asparagine glycan. Histidine 1155 lines the Zn(2+) pocket. Residue glutamate 1229 is the Proton donor/acceptor of the active site. Residues 1279–1329 (NIKGDDNINGDDNIKGGDNIKGDDNIKRDDNFQRDDNFQRDDNFQRGDNFH) form a disordered region. The chain crosses the membrane as a helical span at residues 1368-1388 (LLFMTGVSFGICLFKFINFLS). Over 1389–1620 (YHKSSICRRT…SKRKKVIVIL (232 aa)) the chain is Cytoplasmic. The disordered stretch occupies residues 1560–1620 (PNGKYKGPGF…SKRKKVIVIL (61 aa)). Positions 1581–1597 (NKNESKTEKKSKTENKS) are enriched in basic and acidic residues. Residues 1598 to 1620 (KSKSKNKSKSKNKSKRKKVIVIL) show a composition bias toward basic residues.

Belongs to the peptidase M14 family. Requires Zn(2+) as cofactor.

Its subcellular location is the membrane. The sequence is that of Putative zinc carboxypeptidase from Plasmodium falciparum (isolate 3D7).